Reading from the N-terminus, the 427-residue chain is MLTARSKDLFTQAQEFIPGGVNSPVRAFKSVGADPLFIKKAFGCTITDADNNSYIDYVGSWGPMILGHCHPQVVEAVKRAVESGSSFGAPTELEITLARMVIDAVPSIEMVRMVSSGTEATMSAIRLARGYTGRDKIIKFSGCYHGHADALLVKAGSGAATFGVPDSPGVPVDVAKNTLTAQFNDLDSVSKLIDENKNEIACIIVEPIAGNMGTVPPGEGFLEGLRSICDSEGIVLIFDEVMTGFRVAYGGAQELYGVTPDMTTLGKIIGGGLPVGAFGGKKDIMKLLSPSGGVYQAGTLSGNPLAMTAGIETLKLLQADGFYEQLEQTSRRLAEGITEAAKSAGYPIYPTRVGSMFCTFFTSNEVKDWPTATTCDTKAFAAFFRMMLEKGIYLAPSQFETAFVSIAHTEVEIEKTIVAARSCFAAL.

N6-(pyridoxal phosphate)lysine is present on lysine 267.

This sequence belongs to the class-III pyridoxal-phosphate-dependent aminotransferase family. HemL subfamily. As to quaternary structure, homodimer. Requires pyridoxal 5'-phosphate as cofactor.

Its subcellular location is the cytoplasm. The enzyme catalyses (S)-4-amino-5-oxopentanoate = 5-aminolevulinate. It functions in the pathway porphyrin-containing compound metabolism; protoporphyrin-IX biosynthesis; 5-aminolevulinate from L-glutamyl-tRNA(Glu): step 2/2. The sequence is that of Glutamate-1-semialdehyde 2,1-aminomutase from Geobacter sulfurreducens (strain ATCC 51573 / DSM 12127 / PCA).